We begin with the raw amino-acid sequence, 311 residues long: HTH-type transcriptional regulator DsdC (311 aa).

The 58-residue stretch at 15-72 (WQLSKMHTFEVAARHQSFALAAEELSLSPSAVSHRINQLEEELGIQLFVRSHRKVELT) folds into the HTH lysR-type domain. A DNA-binding region (H-T-H motif) is located at residues 32-51 (FALAAEELSLSPSAVSHRIN).

It belongs to the LysR transcriptional regulatory family.

In terms of biological role, regulates the expression of the dsdX-dsdA operon. This is HTH-type transcriptional regulator DsdC from Escherichia coli (strain K12).